Here is a 225-residue protein sequence, read N- to C-terminus: Probable septum site-determining protein MinC (225 aa).

This sequence belongs to the MinC family. In terms of assembly, interacts with MinD and FtsZ.

In terms of biological role, cell division inhibitor that blocks the formation of polar Z ring septums. Rapidly oscillates between the poles of the cell to destabilize FtsZ filaments that have formed before they mature into polar Z rings. Prevents FtsZ polymerization. This is Probable septum site-determining protein MinC from Listeria welshimeri serovar 6b (strain ATCC 35897 / DSM 20650 / CCUG 15529 / CIP 8149 / NCTC 11857 / SLCC 5334 / V8).